The sequence spans 319 residues: Annexin A4 (319 aa).

An N-acetylalanine modification is found at Ala2. Thr7 is modified (phosphothreonine; by PKC). A Phosphoserine modification is found at Ser12. Annexin repeat units follow at residues 14-85 (FNAA…GMMT), 86-157 (PTVL…SLSA), 169-241 (ALVR…AIVK), and 245-316 (NKSA…ILCG). N6-acetyllysine occurs at positions 213, 293, and 300.

This sequence belongs to the annexin family. As to quaternary structure, monomer.

The protein resides in the zymogen granule membrane. Functionally, calcium/phospholipid-binding protein which promotes membrane fusion and is involved in exocytosis. This chain is Annexin A4 (ANXA4), found in Sus scrofa (Pig).